A 557-amino-acid chain; its full sequence is Urocanate hydratase (557 aa).

NAD(+) contacts are provided by residues 52-53 (GG), Gln-130, 176-178 (GMG), Glu-196, Arg-201, 242-243 (NA), 263-267 (QTSAH), 273-274 (YL), and Tyr-322. Cys-410 is a catalytic residue. Gly-492 contacts NAD(+).

The protein belongs to the urocanase family. NAD(+) is required as a cofactor.

It is found in the cytoplasm. The catalysed reaction is 4-imidazolone-5-propanoate = trans-urocanate + H2O. The protein operates within amino-acid degradation; L-histidine degradation into L-glutamate; N-formimidoyl-L-glutamate from L-histidine: step 2/3. Its function is as follows. Catalyzes the conversion of urocanate to 4-imidazolone-5-propionate. The polypeptide is Urocanate hydratase (Allorhizobium ampelinum (strain ATCC BAA-846 / DSM 112012 / S4) (Agrobacterium vitis (strain S4))).